A 270-amino-acid polypeptide reads, in one-letter code: uncharacterized protein (270 aa).

The protein resides in the virion. This is an uncharacterized protein from Acanthamoeba polyphaga (Amoeba).